A 256-amino-acid chain; its full sequence is Pimeloyl-[acyl-carrier protein] methyl ester esterase (256 aa).

The AB hydrolase-1 domain occupies 15-242 (HLVLLHGWGL…AAHAPFISHP (228 aa)). Substrate is bound by residues Trp-22, 82-83 (SL), and 143-147 (FLALQ). Residue Ser-82 is the Nucleophile of the active site. Catalysis depends on residues Asp-207 and His-235. Position 235 (His-235) interacts with substrate.

This sequence belongs to the AB hydrolase superfamily. Carboxylesterase BioH family. As to quaternary structure, monomer.

It localises to the cytoplasm. The enzyme catalyses 6-carboxyhexanoyl-[ACP] methyl ester + H2O = 6-carboxyhexanoyl-[ACP] + methanol + H(+). It participates in cofactor biosynthesis; biotin biosynthesis. In terms of biological role, the physiological role of BioH is to remove the methyl group introduced by BioC when the pimeloyl moiety is complete. It allows to synthesize pimeloyl-ACP via the fatty acid synthetic pathway through the hydrolysis of the ester bonds of pimeloyl-ACP esters. This Escherichia coli O7:K1 (strain IAI39 / ExPEC) protein is Pimeloyl-[acyl-carrier protein] methyl ester esterase.